The following is a 155-amino-acid chain: Small ribosomal subunit protein uS7c (155 aa).

This sequence belongs to the universal ribosomal protein uS7 family. Part of the 30S ribosomal subunit.

The protein localises to the plastid. The protein resides in the chloroplast. Functionally, one of the primary rRNA binding proteins, it binds directly to 16S rRNA where it nucleates assembly of the head domain of the 30S subunit. This chain is Small ribosomal subunit protein uS7c (rps7), found in Saururus cernuus (Lizard's tail).